Consider the following 62-residue polypeptide: Photosystem II reaction center protein Z (62 aa).

The next 2 membrane-spanning stretches (helical) occupy residues 8 to 28 (AVFA…VVFA) and 41 to 61 (FSGT…NSLI).

It belongs to the PsbZ family. In terms of assembly, PSII is composed of 1 copy each of membrane proteins PsbA, PsbB, PsbC, PsbD, PsbE, PsbF, PsbH, PsbI, PsbJ, PsbK, PsbL, PsbM, PsbT, PsbY, PsbZ, Psb30/Ycf12, at least 3 peripheral proteins of the oxygen-evolving complex and a large number of cofactors. It forms dimeric complexes.

It localises to the plastid. The protein resides in the chloroplast thylakoid membrane. May control the interaction of photosystem II (PSII) cores with the light-harvesting antenna, regulates electron flow through the 2 photosystem reaction centers. PSII is a light-driven water plastoquinone oxidoreductase, using light energy to abstract electrons from H(2)O, generating a proton gradient subsequently used for ATP formation. The sequence is that of Photosystem II reaction center protein Z from Pisum sativum (Garden pea).